We begin with the raw amino-acid sequence, 1174 residues long: Ribonucleoside-diphosphate reductase large subunit-like protein (1174 aa).

The RIP homotypic interaction motif (RHIM) signature appears at 50–72; that stretch reads PYVRIMNGVSGIQIGNHNAMSIA. Disordered regions lie at residues 170–269 and 291–325; these read ASNA…KLKP and AAAA…DQSS. Low complexity-rich tracts occupy residues 182–202, 233–243, and 291–316; these read ATSG…AATA, HVSVGTQATPS, and AAAA…AMAT.

It belongs to the ribonucleoside diphosphate reductase large chain family. As to quaternary structure, self-assembles into homo-oligomeric amyloid fibrils. Interacts with host RIPK1 (via RIP homotypic interaction motif); this interaction inhibits RIPK1 ubiquitination thereby preventing effective activation of host NF-kappa-B. Interacts with host RIPK3 (via RIP homotypic interaction motif); this interaction disrupts RIPK3-RIPK1 interactions characteristic of TNF-alpha induced necroptosis, thereby suppressing this death pathway. Interacts (via RIP homotypic interaction motif) with host ZBP1 (via RIP homotypic interaction motif); this interaction inhibits recruitment of RIPK1 and RIPK3 to ZBP1 and prevents ZBP1-induced NF-kappa-B activation. Undergoes proteolytic cleavage, generating two peptides, a N-terminal and a 116 kDa. The N-terminal peptide retains RIPK1- and RIPK3-binding activity as well as cell death suppression activity.

It is found in the virion. The protein localises to the host cytoplasm. Its function is as follows. Provides optimal viral replication conditions by promoting host cell survival and avoiding the host inflammatory response linked to NF-kappa-B activation. Blocks RIPK1 ubiquitination, thereby preventing NF-kappa-B activation and virally induced inflammatory response. Prevents host necroptosis by targeting RIPK3 thereby preventing the formation of necroptotic RIPK1-RIPK3 complexes. Also inhibits ZBP1-induced necroptosis. Does not have ribonucleotide reductase activity. Betaherpesviruses probably use another strategy to expand the dNTP pool in a quiescent host cell. This chain is Ribonucleoside-diphosphate reductase large subunit-like protein, found in Murid herpesvirus 1 (strain Smith) (MuHV-1).